The chain runs to 550 residues: MATPQQPLLTKTHKQNSIISFKILTFVVTLFVALFLVVFLVAPYQFEIKHSNLCKTAQDSQLCLSYVSDLMSNEIVTTDSDGLSILMKFLVNYVHQMNNAIPVVSKMKNQINDIRQEGALTDCLELLDQSVDLVSDSIAAIDKRTHSEHANAQSWLSGVLTNHVTCLDELDSFTKAMINGTNLDELISRAKVALAMLASVTTPNDDVLRPGLGKMPSWVSSRDRKLMESSGKDIGANAVVAKDGTGKYRTLAEAVAAAPDKSKTRYVIYVKRGIYKENVEVSSRKMKLMIVGDGMHATIITGNLNVVDGSTTFHSATLAAVGKGFILQDICIQNTAGPAKHQAVALRVGADKSVINRCRIDAYQDTLYAHSQRQFYRDSYVTGTIDFIFGNAAVVFQKCKLVARKPGKYQQNMVTAQGRTDPNQATGTSIQFCNIIASSDLEPVLKEFPTYLGRPWKKYSRTVVMESYLGGLINPAGWAEWDGDFALKTLYYGEFMNNGPGAGTSKRVKWPGYHCITDPAEAMPFTVAKLIQGGSWLRSTGVAYVDGLYD.

Asn-179 carries N-linked (GlcNAc...) asparagine glycosylation. Substrate contacts are provided by Thr-312 and Gln-342. Cys-331 and Cys-358 form a disulfide bridge. Residue Asp-365 is the Proton donor of the active site. Residue Asp-386 is the Nucleophile of the active site. Cysteines 399 and 433 form a disulfide. 2 residues coordinate substrate: Arg-454 and Trp-456.

This sequence in the N-terminal section; belongs to the PMEI family. The protein in the C-terminal section; belongs to the pectinesterase family.

It is found in the secreted. It localises to the cell wall. It catalyses the reaction [(1-&gt;4)-alpha-D-galacturonosyl methyl ester](n) + n H2O = [(1-&gt;4)-alpha-D-galacturonosyl](n) + n methanol + n H(+). The protein operates within glycan metabolism; pectin degradation; 2-dehydro-3-deoxy-D-gluconate from pectin: step 1/5. In terms of biological role, pectinesterase may play a role in cell wall metabolism during fruit growth and development prior to ripening and may be required for preparing cell walls for softening by polygalacturonase during fruit ripening. This chain is Pectinesterase 2.2 (PME2.2), found in Solanum lycopersicum (Tomato).